Reading from the N-terminus, the 27-residue chain is Zinc metalloproteinase multactivase catalytic subunit (27 aa).

The region spanning 12–27 (FIELVIIVDHSXXTYK) is the Peptidase M12B domain. Glutamate 14 lines the Ca(2+) pocket.

It belongs to the venom metalloproteinase (M12B) family. P-III subfamily. P-IIId sub-subfamily. Heterodimer of a metalloproteinase subunit and a regulatory subunit comprising two homologous disulfide-linked lectins (AC P81798). The cofactor is Zn(2+). Expressed by the venom gland.

The protein resides in the secreted. Its function is as follows. This carinactivase-like calcium-dependent prothrombin (F2) activator activates prothrombin via recognition of the calcium ion bound conformation of its gamma-carboxyglutamic acid (GLA) domain, and the subsequent conversion of prothrombin to active thrombin is catalyzed by the catalytic subunit. This is Zinc metalloproteinase multactivase catalytic subunit from Echis multisquamatus (Central Asian sand viper).